The chain runs to 2171 residues: DExH-box ATP-dependent RNA helicase DExH12 (2171 aa).

Disordered stretches follow at residues 24–80, 218–267, and 383–426; these read SLVL…KERD, EENE…NEGT, and TAKE…ESGW. Basic and acidic residues-rich tracts occupy residues 31–40 and 50–80; these read NRPRDTHEPT and IDPR…KERD. Residues 218–242 are compositionally biased toward acidic residues; sequence EENEEDDEESDPDMVEEDDDEEDDE. Positions 383 to 423 are enriched in basic and acidic residues; it reads TAKEREENLQKSINEEARRLKDETGGDGGRGRRDVADRDSE. Residues 514–697 form the Helicase ATP-binding 1 domain; the sequence is DTALFKAENI…FLRVDLKKGL (184 aa). 527-534 provides a ligand contact to ATP; the sequence is APTGAGKT. The DEIH box signature appears at 639–642; it reads DEIH. One can recognise a Helicase C-terminal 1 domain in the interval 731-941; the sequence is LCYQKVLAGA…GTVQNAREAC (211 aa). The region spanning 1006–1308 is the SEC63 1 domain; that stretch reads TDLGRIASYY…WLGSETVLPV (303 aa). A Helicase ATP-binding 2 domain is found at 1360-1537; that stretch reads TVLYNTNDNV…WIGASSHGLF (178 aa). 1373-1380 contributes to the ATP binding site; the sequence is APTGSGKT. Positions 1479–1482 match the DELH box motif; that stretch reads DELH. In terms of domain architecture, Helicase C-terminal 2 spans 1574–1779; it reads AIVQHAKNKK…GVIENKQDAV (206 aa). In terms of domain architecture, SEC63 2 spans 1839-2157; it reads PLNLGMIASY…LGCDQEYSFS (319 aa).

Belongs to the DExH box helicase family. In terms of assembly, interacts with CLO.

It is found in the nucleus. The catalysed reaction is ATP + H2O = ADP + phosphate + H(+). Its function is as follows. RNA helicase that plays an essential role in pre-mRNA splicing as component of the U5 snRNP and U4/U6-U5 tri-snRNP complexes. Involved in spliceosome assembly, activation and disassembly. This chain is DExH-box ATP-dependent RNA helicase DExH12, found in Arabidopsis thaliana (Mouse-ear cress).